The following is a 357-amino-acid chain: D-alanine--D-alanine ligase A (357 aa).

In terms of domain architecture, ATP-grasp spans 143–348 (KRLLREAGLA…YSKVIDVLIE (206 aa)). ATP is bound at residue 171–226 (AGALGLPFFAKPARQGSSFGVSKVHDRDGFEQAVETALRYDSKALIEEFVDGREIE). The Mg(2+) site is built by Asp-302, Glu-315, and Asn-317.

The protein belongs to the D-alanine--D-alanine ligase family. Requires Mg(2+) as cofactor. It depends on Mn(2+) as a cofactor.

The protein localises to the cytoplasm. The enzyme catalyses 2 D-alanine + ATP = D-alanyl-D-alanine + ADP + phosphate + H(+). Its pathway is cell wall biogenesis; peptidoglycan biosynthesis. In terms of biological role, cell wall formation. The polypeptide is D-alanine--D-alanine ligase A (Mesorhizobium japonicum (strain LMG 29417 / CECT 9101 / MAFF 303099) (Mesorhizobium loti (strain MAFF 303099))).